The chain runs to 788 residues: Calpastatin (788 aa).

Pro residues predominate over residues Met1 to Ser11. Disordered stretches follow at residues Met1–Val262, Leu289–Ile493, and Thr514–Gln580. Ser11 is modified (phosphoserine). Low complexity predominate over residues Pro12–Arg21. Residues Pro38 to Ala49 show a composition bias toward basic and acidic residues. Low complexity predominate over residues Ala65 to Thr87. Residues Glu99–Gln119 are compositionally biased toward basic and acidic residues. Lys112 is covalently cross-linked (Glycyl lysine isopeptide (Lys-Gly) (interchain with G-Cter in SUMO2)). Residue Lys129 is modified to N6-acetyllysine. Ser165 carries the post-translational modification Phosphoserine. Thr216 carries the post-translational modification Phosphothreonine. At Ser219 the chain carries Phosphoserine. A compositionally biased stretch (basic and acidic residues) spans Gly246–Pro256. An Inhibitory domain 1 repeat occupies Thr251–Ser303. Ser303 and Ser324 each carry phosphoserine. Composition is skewed to polar residues over residues Ser318–Lys328 and Gln369–Thr380. One copy of the Inhibitory domain 2 repeat lies at Asp384–Pro436. Composition is skewed to basic and acidic residues over residues Gln394–Cys408 and Tyr419–Lys430. A compositionally biased stretch (low complexity) spans Lys441 to Ser453. Phosphoserine is present on residues Ser444, Ser446, and Ser453. A Phosphothreonine modification is found at Thr479. Ser518 is subject to Phosphoserine. The segment covering Arg522–Lys570 has biased composition (basic and acidic residues). One copy of the Inhibitory domain 3 repeat lies at Ala524 to Ser577. A phosphoserine mark is found at Ser594, Ser605, Ser653, and Ser655. The disordered stretch occupies residues Val620–Ser788. The stretch at Pro661–Lys714 is one Inhibitory domain 4 repeat. Composition is skewed to basic and acidic residues over residues Pro661 to Ile726 and Ala759 to Ser788.

The protein belongs to the protease inhibitor I27 (calpastatin) family. As to expression, isoform 2 is the major form in all tissues examined. Isoform 1 accounts for 5-10% in tissues such as skeletal muscle, liver and brain, and 30% in myoblasts. Isoforms 4 and 5 are testis-specific. Isoform 6 is highly expressed in heart and skeletal muscle with lower levels in liver, brain and testis. Isoform 7 is expressed at high levels in liver.

Its function is as follows. Specific inhibition of calpain (calcium-dependent cysteine protease). Plays a key role in postmortem tenderization of meat and have been proposed to be involved in muscle protein degradation in living tissue. In Mus musculus (Mouse), this protein is Calpastatin (Cast).